An 850-amino-acid chain; its full sequence is Probable beta-glucosidase J (850 aa).

Asparagine 43 and asparagine 52 each carry an N-linked (GlcNAc...) asparagine glycan. Aspartate 254 is a catalytic residue. In terms of domain architecture, PA14 spans 423-583; it reads TGERGYTFRV…DAETAIKQAV (161 aa). Asparagine 508 carries an N-linked (GlcNAc...) asparagine glycan.

The protein belongs to the glycosyl hydrolase 3 family.

Its subcellular location is the secreted. The enzyme catalyses Hydrolysis of terminal, non-reducing beta-D-glucosyl residues with release of beta-D-glucose.. The protein operates within glycan metabolism; cellulose degradation. Beta-glucosidases are one of a number of cellulolytic enzymes involved in the degradation of cellulosic biomass. Catalyzes the last step releasing glucose from the inhibitory cellobiose. This chain is Probable beta-glucosidase J (bglJ), found in Emericella nidulans (strain FGSC A4 / ATCC 38163 / CBS 112.46 / NRRL 194 / M139) (Aspergillus nidulans).